A 297-amino-acid polypeptide reads, in one-letter code: Cell division protein FtsX (297 aa).

The Cytoplasmic portion of the chain corresponds to 1 to 24 (MKAKTLSRHLREGVKNLSRNGWMT). The chain crosses the membrane as a helical span at residues 25 to 45 (FASVSAVTVTLLLVGVFLTAI). Residues 46-171 (MNMNHFATKV…LFDTVKTGRN (126 aa)) lie on the Extracellular side of the membrane. The chain crosses the membrane as a helical span at residues 172–192 (IGIVLIAGLLFTAMFLISNTI). Over 193-219 (KITIYARSTEIEIMKLVGATNWFIRWP) the chain is Cytoplasmic. The chain crosses the membrane as a helical span at residues 220-240 (FLLEGLFLGVLGSIIPIGLIL). The Extracellular portion of the chain corresponds to 241–270 (VTYNSLQGMFNEKLGGTIFELLPYSPFVFQ). The helical transmembrane segment at 271 to 291 (LAGLLVLIGALIGMWGSVMSI) threads the bilayer. Topologically, residues 292–297 (RRFLKV) are cytoplasmic.

It belongs to the ABC-4 integral membrane protein family. FtsX subfamily. In terms of assembly, interacts with FtsE.

The protein resides in the cell membrane. Its function is as follows. Part of the ABC transporter FtsEX involved in asymmetric cellular division facilitating the initiation of sporulation. This is Cell division protein FtsX from Bacillus anthracis.